The sequence spans 33 residues: Cytochrome b6-f complex subunit 8 (33 aa).

Residues L2–V22 traverse the membrane as a helical segment.

The protein belongs to the PetN family. The 4 large subunits of the cytochrome b6-f complex are cytochrome b6, subunit IV (17 kDa polypeptide, PetD), cytochrome f and the Rieske protein, while the 4 small subunits are PetG, PetL, PetM and PetN. The complex functions as a dimer.

The protein resides in the cellular thylakoid membrane. Its function is as follows. Component of the cytochrome b6-f complex, which mediates electron transfer between photosystem II (PSII) and photosystem I (PSI), cyclic electron flow around PSI, and state transitions. This chain is Cytochrome b6-f complex subunit 8, found in Synechococcus sp. (strain CC9605).